A 66-amino-acid polypeptide reads, in one-letter code: DNA-directed RNA polymerase subunit Rpo10 (66 aa).

Residues Cys-7, Cys-10, Cys-44, and Cys-45 each coordinate Zn(2+).

The protein belongs to the archaeal Rpo10/eukaryotic RPB10 RNA polymerase subunit family. As to quaternary structure, part of the RNA polymerase complex. Requires Zn(2+) as cofactor.

It localises to the cytoplasm. It catalyses the reaction RNA(n) + a ribonucleoside 5'-triphosphate = RNA(n+1) + diphosphate. Its function is as follows. DNA-dependent RNA polymerase (RNAP) catalyzes the transcription of DNA into RNA using the four ribonucleoside triphosphates as substrates. This chain is DNA-directed RNA polymerase subunit Rpo10, found in Pyrobaculum islandicum (strain DSM 4184 / JCM 9189 / GEO3).